A 37-amino-acid chain; its full sequence is Large ribosomal subunit protein bL36 (37 aa).

Belongs to the bacterial ribosomal protein bL36 family.

The sequence is that of Large ribosomal subunit protein bL36 from Bacillus pumilus (strain SAFR-032).